We begin with the raw amino-acid sequence, 496 residues long: Probable 26S proteasome non-ATPase regulatory subunit 3 (496 aa).

In terms of domain architecture, PCI spans 249–428 (ARFLYYLGRI…GYMRSKESTD (180 aa)). The disordered stretch occupies residues 458–480 (RYPPKSYGKELESAEERREREQQ). A compositionally biased stretch (basic and acidic residues) spans 464 to 480 (YGKELESAEERREREQQ).

Belongs to the proteasome subunit S3 family. As to quaternary structure, the 26S proteasome is composed of a core protease, known as the 20S proteasome, capped at one or both ends by the 19S regulatory complex (RC). The RC is composed of at least 18 different subunits in two subcomplexes, the base and the lid, which form the portions proximal and distal to the 20S proteolytic core, respectively.

Functionally, acts as a regulatory subunit of the 26 proteasome which is involved in the ATP-dependent degradation of ubiquitinated proteins. This chain is Probable 26S proteasome non-ATPase regulatory subunit 3 (Dox-A2), found in Anopheles gambiae (African malaria mosquito).